A 1268-amino-acid polypeptide reads, in one-letter code: Neurocan core protein (1268 aa).

The N-terminal stretch at Met-1–Gly-22 is a signal peptide. An Ig-like V-type domain is found at Arg-37–Thr-157. 5 disulfide bridges follow: Cys-58–Cys-139, Cys-181–Cys-252, Cys-205–Cys-226, Cys-279–Cys-354, and Cys-303–Cys-324. A glycan (N-linked (GlcNAc...) asparagine) is linked at Asn-121. Link domains follow at residues Val-159–Ala-254 and Gly-258–Arg-356. Asn-339 carries an N-linked (GlcNAc...) asparagine glycan. 4 disordered regions span residues Gln-363–Pro-391, Pro-406–Ser-442, Pro-472–His-540, and Ile-574–Ser-630. O-linked (Xyl...) (chondroitin sulfate) serine glycosylation is found at Ser-380 and Ser-410. The segment covering Thr-419–Ser-430 has biased composition (polar residues). Residues Ser-575–Pro-585 show a composition bias toward low complexity. Over residues Pro-608–Gly-617 the composition is skewed to pro residues. The span at Pro-618–Ser-630 shows a compositional bias: low complexity. An N-linked (GlcNAc...) asparagine glycan is attached at Asn-742. The EGF-like 1 domain maps to Pro-960–Glu-996. Disulfide bonds link Cys-964–Cys-975, Cys-969–Cys-984, Cys-986–Cys-995, Cys-1002–Cys-1013, Cys-1007–Cys-1022, Cys-1024–Cys-1033, Cys-1040–Cys-1051, Cys-1068–Cys-1160, Cys-1136–Cys-1152, Cys-1167–Cys-1210, and Cys-1196–Cys-1223. Asn-978 carries N-linked (GlcNAc...) asparagine glycosylation. An EGF-like 2; calcium-binding domain is found at Asp-998–Glu-1034. One can recognise a C-type lectin domain in the interval Asp-1036 to Val-1165. One can recognise a Sushi domain in the interval Val-1165–Lys-1225. Asn-1175 is a glycosylation site (N-linked (GlcNAc...) asparagine). Positions Arg-1228 to His-1255 are enriched in basic residues. Residues Arg-1228–Cys-1268 are disordered.

Belongs to the aggrecan/versican proteoglycan family. In terms of processing, O-glycosylated; contains chondroitin sulfate. Brain.

The protein resides in the secreted. Functionally, may modulate neuronal adhesion and neurite growth during development by binding to neural cell adhesion molecules (NG-CAM and N-CAM). Chondroitin sulfate proteoglycan; binds to hyaluronic acid. This is Neurocan core protein (Ncan) from Mus musculus (Mouse).